The following is a 919-amino-acid chain: Glutamate receptor ionotropic, kainate 3 (919 aa).

Residues 1–31 (MTAPWRRLRSLVWEYWAGFLVCAFWIPDSRG) form the signal peptide. The Extracellular segment spans residues 32–563 (MPHVIRIGGI…VFSFLNPLSP (532 aa)). N-linked (GlcNAc...) asparagine glycans are attached at residues asparagine 70, asparagine 76, asparagine 278, asparagine 381, asparagine 415, asparagine 426, and asparagine 433. Cysteine 99 and cysteine 350 are disulfide-bonded. L-glutamate is bound by residues proline 518, threonine 520, and arginine 525. 2 N-linked (GlcNAc...) asparagine glycosylation sites follow: asparagine 548 and asparagine 551. A helical transmembrane segment spans residues 564–584 (DIWMYVLLAYLGVSCVLFVIA). Over 585–636 (RFSPYEWYDAHPCNPGSEVVENNFTLLNSFWFGMGSLMQQGSELMPKALSTR) the chain is Cytoplasmic. The chain crosses the membrane as a helical span at residues 637–657 (IIGGIWWFFTLIIISSYTANL). The Extracellular portion of the chain corresponds to 658–820 (AAFLTVERME…KEASALGIQK (163 aa)). Residues alanine 691, threonine 692, and glutamate 739 each coordinate L-glutamate. An N-linked (GlcNAc...) asparagine glycan is attached at asparagine 752. The chain crosses the membrane as a helical span at residues 821 to 841 (IGGIFIVLAAGLVLSVLVAVG). Residues 842–919 (EFIYKLRKTA…CSTSLAPVFP (78 aa)) lie on the Cytoplasmic side of the membrane. At serine 869 the chain carries Phosphoserine. Residue lysine 887 forms a Glycyl lysine isopeptide (Lys-Gly) (interchain with G-Cter in SUMO1) linkage.

The protein belongs to the glutamate-gated ion channel (TC 1.A.10.1) family. GRIK3 subfamily. Homotetramer, and heterotetramer with GRIK4 or GRIK5. Can form functional heteromeric receptors with GRIK2. Interacts with PRKCABP. Interacts with NETO2. In terms of assembly, homomeric GluR7A forms functional kainate receptors which have very low sensitivity to glutamate. Can form functional heteromeric receptors with GRIK4 and GRIK5. As to quaternary structure, homomeric GluR7B forms functional kainate receptors. Mass spectrometry data suggest the protein is N-glycosylated at five distinct sites. In terms of tissue distribution, expressed in the olfactory bulb (at protein level). Expressed in the deep cortical layers, dentate gyrus, reticular thalamic nucleus, mammillary bodies, pons, and cerebellum of the adult.

The protein localises to the cell membrane. The protein resides in the postsynaptic cell membrane. It catalyses the reaction Ca(2+)(in) = Ca(2+)(out). Ionotropic glutamate receptor that functions as a cation-permeable ligand-gated ion channel, gated by L-glutamate and the glutamatergic agonist kainic acid. Binding of the excitatory neurotransmitter L-glutamate induces a conformation change, leading to the opening of the cation channel, and thereby converts the chemical signal to an electrical impulse. The receptor then desensitizes rapidly and enters a transient inactive state, characterized by the presence of bound agonist. In association with GRIK2, involved in presynaptic facilitation of glutamate release at hippocampal mossy fiber synapses. Its function is as follows. Ionotropic glutamate receptor that functions as a ligand-gated cation channel, gated by L-glutamate and the glutamatergic agonist kainic acid. The polypeptide is Glutamate receptor ionotropic, kainate 3 (Grik3) (Rattus norvegicus (Rat)).